Reading from the N-terminus, the 369-residue chain is Trans-enoyl reductase pyiC (369 aa).

52–55 is an NADP(+) binding site; sequence CDYK. 137 to 144 contacts substrate; that stretch reads TGIGTLGM. Residues 195 to 198, Tyr-213, and 260 to 261 contribute to the NADP(+) site; these read SPKN and LE. Residue 280–284 participates in substrate binding; the sequence is GPLLL. Residue 349-350 participates in NADP(+) binding; that stretch reads VS.

It belongs to the zinc-containing alcohol dehydrogenase family. As to quaternary structure, monomer.

It participates in mycotoxin biosynthesis. Functionally, trans-enoyl reductase; part of the gene cluster that mediates the biosynthesis of the mycotoxin pyrichalasin H, a tyrosine-derived cytochalasan that inhibits the growth of rice seedlings, but also inhibits lymphocyte capping and actin polymerization and alters cell morphology. Pyrichalasin H is indicated as the responsible agent for the genus-specific pathogenicity of M.grisea toward crabgrass. The first step in the pathway is catalyzed by the O-methyltransferase pyiA which methylates free tyrosine to generate the precursor O-methyltyrosine. The hybrid PKS-NRPS pyiS, assisted by the enoyl reductase pyiC, are responsible for fusion of the O-methyltyrosine precursor and the polyketide backbone. The polyketide synthase module (PKS) of pyiS is responsible for the synthesis of the polyketide backbone and the downstream nonribosomal peptide synthetase (NRPS) amidates the carboxyl end of the polyketide with the O-methyltyrosine precursor. As the NRPS A-domain demonstrates substrate tolerance, pyiS can also use phenylalanine, tyrosine and even para-chlorophenylalanine as amino acid precursor, which leads to the production of novel cytochalasans, including halogenated cytochalasans. Because pyiS lacks a designated enoylreductase (ER) domain, the required activity is provided the enoyl reductase pyiC. Reduction by the hydrolyase pyiE, followed by dehydration and intra-molecular Diels-Alder cyclization by the Diels-Alderase pyiF then yield the required isoindolone-fused macrocycle. The tailoring cytochrome P450 monooxygenases piyD and piyG catalyze the hydroxylation at C-18 and C-7, respectivily, whereas the short-chain dehydrogenase/reductase pyiH reduces the carbonyl at C-21 in preparation for the transfer of an acetyl group by the acetyltransferase pyiB. These 3 reactions whose order is not clear yet, lead to the production of O-methylpyrichalasin J, a deacetylated pyrichalasin H. Finally, pyiB to converts O-methylpyrichalasin J into the final product pyrichalasin H via acetylation of C-21. The chain is Trans-enoyl reductase pyiC from Pyricularia grisea (Crabgrass-specific blast fungus).